Here is a 232-residue protein sequence, read N- to C-terminus: Enolase-phosphatase E1 (232 aa).

The protein belongs to the HAD-like hydrolase superfamily. MasA/MtnC family. Monomer. Requires Mg(2+) as cofactor.

The enzyme catalyses 5-methylsulfanyl-2,3-dioxopentyl phosphate + H2O = 1,2-dihydroxy-5-(methylsulfanyl)pent-1-en-3-one + phosphate. It functions in the pathway amino-acid biosynthesis; L-methionine biosynthesis via salvage pathway; L-methionine from S-methyl-5-thio-alpha-D-ribose 1-phosphate: step 3/6. The protein operates within amino-acid biosynthesis; L-methionine biosynthesis via salvage pathway; L-methionine from S-methyl-5-thio-alpha-D-ribose 1-phosphate: step 4/6. In terms of biological role, bifunctional enzyme that catalyzes the enolization of 2,3-diketo-5-methylthiopentyl-1-phosphate (DK-MTP-1-P) into the intermediate 2-hydroxy-3-keto-5-methylthiopentenyl-1-phosphate (HK-MTPenyl-1-P), which is then dephosphorylated to form the acireductone 1,2-dihydroxy-3-keto-5-methylthiopentene (DHK-MTPene). In Xylella fastidiosa (strain 9a5c), this protein is Enolase-phosphatase E1.